The sequence spans 88 residues: Large ribosomal subunit protein bL27 (88 aa).

The tract at residues 1–24 (MAHKKGTGSTRNGRDSNSKRLGVK) is disordered.

It belongs to the bacterial ribosomal protein bL27 family.

In Prochlorococcus marinus (strain MIT 9313), this protein is Large ribosomal subunit protein bL27.